Reading from the N-terminus, the 252-residue chain is Large ribosomal subunit protein uL4 (252 aa).

It belongs to the universal ribosomal protein uL4 family. As to quaternary structure, part of the 50S ribosomal subunit.

One of the primary rRNA binding proteins, this protein initially binds near the 5'-end of the 23S rRNA. It is important during the early stages of 50S assembly. It makes multiple contacts with different domains of the 23S rRNA in the assembled 50S subunit and ribosome. In terms of biological role, forms part of the polypeptide exit tunnel. The polypeptide is Large ribosomal subunit protein uL4 (Methanococcus maripaludis (strain DSM 14266 / JCM 13030 / NBRC 101832 / S2 / LL)).